A 157-amino-acid polypeptide reads, in one-letter code: Transcription factor HES-2 (157 aa).

Positions 13 to 70 (LRKNLKPLLEKRRRARINESLSQLKGLVLPLLGAETSRSSKLEKADILEMTVRFLQEQ) constitute a bHLH domain. Residues 86–119 (YLEGYRACLARLARVLPACSVLEPAVSARLLEHL) form the Orange domain. Positions 124 to 157 (VSDDSPSLTLPPAPAPAPSPPVPPPGSSGLWRPW) are disordered. Over residues 132–149 (TLPPAPAPAPSPPVPPPG) the composition is skewed to pro residues. The WRPW motif signature appears at 154–157 (WRPW).

Transcription repression requires formation of a complex with a corepressor protein of the Groucho/TLE family.

The protein localises to the nucleus. Its function is as follows. Transcriptional repressor of genes that require a bHLH protein for their transcription. This is Transcription factor HES-2 (Hes2) from Mus musculus (Mouse).